The following is a 1004-amino-acid chain: Unconventional myosin-Id (1004 aa).

Positions 9–695 (FGKADFVLLD…TIFSLEEQRA (687 aa)) constitute a Myosin motor domain. ATP is bound at residue 102–109 (GESGAGKT). Residues 572–594 (MISLVEKLASKEPYYVRCIKPND) are actin-binding. IQ domains lie at 699–719 (KRIVLFLQKVWRGTLARMRYR) and 721–741 (MRAALIIIRAYRRYKVKSYIR). The 192-residue stretch at 812-1003 (GQRADLGLQR…RSGYILSVPG (192 aa)) folds into the TH1 domain.

Belongs to the TRAFAC class myosin-kinesin ATPase superfamily. Myosin family. As to quaternary structure, interacts (via the two IQ motifs) with calmodulin. Interacts with F-actin.

The protein localises to the cytoplasm. It is found in the perikaryon. It localises to the cell projection. Its subcellular location is the dendrite. The protein resides in the early endosome. The protein localises to the cell cortex. In terms of biological role, unconventional myosin that functions as actin-based motor protein with ATPase activity. Plays a role in the formation of Kupffer's vesicle, an organ that functions as a left-right organizer during embryogenesis. Plays a role in vesicular trafficking events that are required for normal lumen expansion of Kupffer's vesicle. Required for normal orientation of cilia in Kupffer's vesicle, and thus for normal, unidirectional circular flow and normal angular flow velocity, which then mediates asymmetric gene expression and left-right asymmetric development. Plays a role in endosomal protein trafficking, and especially in the transfer of cargo proteins from early to recycling endosomes. Required for normal planar cell polarity in ciliated cells, for normal rotational polarity of cilia, and for coordinated, unidirectional ciliary movement. The sequence is that of Unconventional myosin-Id (myo1d) from Danio rerio (Zebrafish).